Consider the following 210-residue polypeptide: Large ribosomal subunit protein uL3 (210 aa).

Positions 133 to 152 are disordered; that stretch reads ATHGNSLSHRVHGSTGQNQT. An N5-methylglutamine modification is found at Gln151.

The protein belongs to the universal ribosomal protein uL3 family. As to quaternary structure, part of the 50S ribosomal subunit. Forms a cluster with proteins L14 and L19. Post-translationally, methylated by PrmB.

Its function is as follows. One of the primary rRNA binding proteins, it binds directly near the 3'-end of the 23S rRNA, where it nucleates assembly of the 50S subunit. This chain is Large ribosomal subunit protein uL3, found in Francisella philomiragia subsp. philomiragia (strain ATCC 25017 / CCUG 19701 / FSC 153 / O#319-036).